Consider the following 20-residue polypeptide: TDMLAVSVSSTDAIGHKYGT.

The segment at 1 to 20 (TDMLAVSVSSTDAIGHKYGT) is disordered.

Homodimer; may be disulfide-linked. In terms of processing, the N-terminus is blocked.

It carries out the reaction a phosphate monoester + H2O = an alcohol + phosphate. Completely inhibited by thiol-reducing agents, such as DTT and 2-mercaptoethanol. Activity was also inhibited by sodium orthovanadate, sodium molybdate, N-ethylmaleimide, EDTA and zinc ion, but was not inhibited by okadaic acid. Its function is as follows. Acts against tyrosine-phosphatases. This Prevotella intermedia protein is Alkaline phosphatase.